A 159-amino-acid chain; its full sequence is Large ribosomal subunit protein uL10 (159 aa).

The protein belongs to the universal ribosomal protein uL10 family. As to quaternary structure, part of the ribosomal stalk of the 50S ribosomal subunit. The N-terminus interacts with L11 and the large rRNA to form the base of the stalk. The C-terminus forms an elongated spine to which L12 dimers bind in a sequential fashion forming a multimeric L10(L12)X complex.

Its function is as follows. Forms part of the ribosomal stalk, playing a central role in the interaction of the ribosome with GTP-bound translation factors. This chain is Large ribosomal subunit protein uL10 (rplJ), found in Campylobacter jejuni subsp. jejuni serotype O:2 (strain ATCC 700819 / NCTC 11168).